The sequence spans 178 residues: Ribosome maturation factor RimM (178 aa).

In terms of domain architecture, PRC barrel spans 95–174 (EGQHFWFNVI…IVHVKDAKDI (80 aa)).

This sequence belongs to the RimM family. In terms of assembly, binds ribosomal protein uS19.

It localises to the cytoplasm. Its function is as follows. An accessory protein needed during the final step in the assembly of 30S ribosomal subunit, possibly for assembly of the head region. Essential for efficient processing of 16S rRNA. May be needed both before and after RbfA during the maturation of 16S rRNA. It has affinity for free ribosomal 30S subunits but not for 70S ribosomes. The polypeptide is Ribosome maturation factor RimM (Sulfurovum sp. (strain NBC37-1)).